Reading from the N-terminus, the 2006-residue chain is E3 ubiquitin-protein ligase PRT6 (2006 aa).

The UBR-type zinc finger occupies 119 to 189 (GVCGSVWGQN…PDGFCSNHKG (71 aa)). 2 disordered regions span residues 1167–1186 (LSSS…SDSV) and 1338–1380 (DHQP…AGSD). The span at 1338–1348 (DHQPHEAENCS) shows a compositional bias: basic and acidic residues. The segment covering 1349-1360 (EKNSVGGPSTLQ) has biased composition (polar residues). The segment covering 1364–1377 (PDIRSRQTSRRPDA) has biased composition (basic and acidic residues). The RING-type; degenerate zinc finger occupies 1395-1440 (CGHAVHQSCLERYLKSLKERSGRRTVFEGAHIVDLKKKEFLCPVCR).

Belongs to the E3 ubiquitin-protein ligase UBR1-like family.

The catalysed reaction is S-ubiquitinyl-[E2 ubiquitin-conjugating enzyme]-L-cysteine + [acceptor protein]-L-lysine = [E2 ubiquitin-conjugating enzyme]-L-cysteine + N(6)-ubiquitinyl-[acceptor protein]-L-lysine.. It functions in the pathway protein modification; protein ubiquitination. Its function is as follows. Ubiquitin protein ligase which is a component of the N-end rule pathway with arginine specificity, and functions with the arginyltransferases ATE1 and ATE2. Recognizes and binds to proteins bearing specific N-terminal residues that are destabilizing according to the N-end rule, leading to their ubiquitination and subsequent degradation. Does not participate in degradation of proteins with N-terminal Phe or Leu. The N-end rule pathway regulates seed after-ripening, seedling sugar sensitivity, seedling lipid breakdown, and abscisic acid (ABA) sensitivity of germination. The N-end rule pathway regulates various aspects of leaf and shoot development. Involved in the ubiquitination and subsequent degradation of RAP2-12, an activator of hypoxic gene expression. The ubiquitination occurs after the N-arginylation of RAP2-12 by ATE1 or ATE2 under aerobic conditions. The end-rule pathway plays a role in regulating the timing and amplitude of the immune response following infection with the bacterial pathogen Pseudomonas syringae pv tomato. Regulates the biosynthesis of plant-defense metabolites such as glucosinolates, and the biosynthesis and response to the phytohormone jasmonate (JA), which plays a key role in plant immunity. Controls the expression of specific defense-response genes, activates the synthesis pathway for the phytoalexin camalexin, and influences basal resistance to the hemibiotroph pathogen Pseudomonas syringae pv tomato. Coordinates the mobilization of seed storage reserves and regulates the abundance and activities of several proteases following seed germination. This is E3 ubiquitin-protein ligase PRT6 from Arabidopsis thaliana (Mouse-ear cress).